The chain runs to 614 residues: RNA polymerase sigma factor RpoD (614 aa).

Positions 178–222 are disordered; that stretch reads THIGSDLSQSERDKDDSKDDSKDDDEDEEEEGPKGPDPEESKERF. Positions 186-198 are enriched in basic and acidic residues; the sequence is QSERDKDDSKDDS. Residues 199 to 208 are compositionally biased toward acidic residues; sequence KDDDEDEEEE. The span at 209–222 shows a compositional bias: basic and acidic residues; sequence GPKGPDPEESKERF. Residues 380 to 450 form a sigma-70 factor domain-2 region; sequence MVEANLRLVI…TRSIADQART (71 aa). Positions 404 to 407 match the Interaction with polymerase core subunit RpoC motif; the sequence is DLIQ. The segment at 459 to 535 is sigma-70 factor domain-3; the sequence is ETINKLNRIS…DTTLELPLDS (77 aa). The segment at 548-601 is sigma-70 factor domain-4; it reads VLAGLTAREAKVLRMRFGIDMNTDHTLEEVGKQFDVTRERIRQIEAKALRKLRH. The segment at residues 574-593 is a DNA-binding region (H-T-H motif); sequence LEEVGKQFDVTRERIRQIEA.

This sequence belongs to the sigma-70 factor family. RpoD/SigA subfamily. In terms of assembly, interacts transiently with the RNA polymerase catalytic core.

It localises to the cytoplasm. Functionally, sigma factors are initiation factors that promote the attachment of RNA polymerase to specific initiation sites and are then released. This sigma factor is the primary sigma factor during exponential growth. The chain is RNA polymerase sigma factor RpoD from Shewanella violacea (strain JCM 10179 / CIP 106290 / LMG 19151 / DSS12).